The sequence spans 479 residues: Wax ester synthase/diacylglycerol acyltransferase 2 (479 aa).

The Cytoplasmic segment spans residues 1–182 (MAIERQVTEA…VAPKKNKAKN (182 aa)). Residue His144 is the Proton acceptor of the active site. A helical membrane pass occupies residues 183–199 (VCFSLVAWLWFIVRLMF). Residues 200 to 479 (HTCVEVIKSI…PKKVFHASKV (280 aa)) lie on the Lumenal side of the membrane. Asn253 is a glycosylation site (N-linked (GlcNAc...) asparagine).

It in the N-terminal section; belongs to the long-chain O-acyltransferase family. Mostly expressed in flowers and siliques and barely in roots and stems.

Its subcellular location is the cell membrane. It localises to the endoplasmic reticulum membrane. The enzyme catalyses an acyl-CoA + a 1,2-diacyl-sn-glycerol = a triacyl-sn-glycerol + CoA. It catalyses the reaction a long chain fatty alcohol + a fatty acyl-CoA = a wax ester + CoA. It participates in glycerolipid metabolism; triacylglycerol biosynthesis. Its pathway is lipid metabolism. Bifunctional wax ester synthase/diacylglycerol acyltransferase. Involved in cuticular wax biosynthesis. In Arabidopsis thaliana (Mouse-ear cress), this protein is Wax ester synthase/diacylglycerol acyltransferase 2.